The sequence spans 523 residues: F-box only protein 31-B (523 aa).

One can recognise an F-box domain in the interval 59-105; that stretch reads PRSLLQLPPEILVEIFSSLPGTELPSLAQVCRKFRQILTTDTIWKRR. Zn(2+) is bound by residues Cys-201, His-209, Cys-225, and His-231. Positions 372 to 427 are disordered; the sequence is IQREQRQTGNEEDDGKGAGPDRAEHSQQPAPVHRPAKEDVNGVDNADDREQKPPNV. Basic and acidic residues-rich tracts occupy residues 386 to 396 and 406 to 423; these read GKGAGPDRAEH and PAKE…REQK.

This sequence belongs to the FBXO31 family. In terms of assembly, part of a SCF (SKP1-cullin-F-box) protein ligase complex SCF(FBXO31).

It localises to the cytoplasm. It participates in protein modification; protein ubiquitination. Its function is as follows. Substrate-recognition component of the SCF(FBXO31) protein ligase complex, which specifically mediates the ubiquitination of proteins amidated at their C-terminus in response to oxidative stress, leading to their degradation by the proteasome. Fbxo31 specifically recognizes and binds C-terminal peptides bearing an amide: C-terminal amidation in response to oxidative stress takes place following protein fragmentation. The SCF(FBXO31) also plays a role in G1 arrest following DNA damage by mediating ubiquitination of phosphorylated cyclin-D1 (ccnd1), promoting its degradation by the proteasome, resulting in G1 arrest. The SCF(FBXO31) complex is however not a major regulator of ccnd1 stability during the G1/S transition. The chain is F-box only protein 31-B (fbxo31-b) from Xenopus laevis (African clawed frog).